Consider the following 2648-residue polypeptide: E3 ubiquitin-protein ligase hecd-1 (2648 aa).

ANK repeat units lie at residues 374–403 (VGQS…DVNK) and 405–434 (HKSS…NPDL). The span at 433–455 (DLRDEDGKTALDKARERSDDDHN) shows a compositional bias: basic and acidic residues. Disordered regions lie at residues 433-494 (DLRD…ELPN), 645-714 (PMEI…KATA), and 1376-1400 (DPPK…ALPP). 3 stretches are compositionally biased toward polar residues: residues 478–489 (ASTSKQPGTSTK), 652–661 (NQPSSSTAVP), and 670–688 (TVPS…NPST). Low complexity-rich tracts occupy residues 696 to 714 (SSTP…KATA) and 1383 to 1400 (PAGT…ALPP). One can recognise an MIB/HERC2 domain in the interval 1438-1510 (RSRGSYKISE…NFDIERVTST (73 aa)). 4 disordered regions span residues 1538–1562 (YTPK…GSSR), 1575–1629 (KNTT…SLQH), 1652–1796 (NQEP…LLGG), and 1811–1836 (ESLS…GKKP). Low complexity-rich tracts occupy residues 1543–1562 (TGGP…GSSR) and 1575–1586 (KNTTPAGTPSSG). The segment covering 1610–1629 (TSGPSVASTGQAASAESLQH) has biased composition (polar residues). Positions 1653 to 1666 (QEPEDEPMGGEESD) are enriched in acidic residues. Residues 1667–1696 (SAASMRSAASSNSQMSMGSSSQQQQQQDSD) show a composition bias toward low complexity. Composition is skewed to acidic residues over residues 1736–1746 (TDGDADADETN) and 1756–1783 (DAME…DESS). Positions 1812 to 1823 (SLSDASSSAKDA) are enriched in low complexity. One can recognise an HECT domain in the interval 2240–2648 (FHADRKAVLE…AINEKGFHLN (409 aa)). The Glycyl thioester intermediate role is filled by Cys2617.

Belongs to the UPL family. K-HECT subfamily. As to expression, expressed in most tissues, including hypodermis, muscle, intestine, vulva, and neurons.

It catalyses the reaction S-ubiquitinyl-[E2 ubiquitin-conjugating enzyme]-L-cysteine + [acceptor protein]-L-lysine = [E2 ubiquitin-conjugating enzyme]-L-cysteine + N(6)-ubiquitinyl-[acceptor protein]-L-lysine.. The protein operates within protein modification; protein ubiquitination. Functionally, E3 ubiquitin-protein ligase which accepts ubiquitin from an E2 ubiquitin-conjugating enzyme in the form of a thioester and then directly transfers the ubiquitin to targeted substrates. Involved in the ubiquitination and proteasomal-mediated degradation of cytoplasmic and mitochondrial proteins. Positively regulates lin-12 activity in the anchor cell (AC)/vulval precursor (VU) cell fate decision. Negatively regulates glp-1 activity in germline proliferation. May play a role in the formation of fibrous organelles, a hemidesmosome-like structure attaching muscles to the epidermis. Regulates germline DNA double-strand-break repair and apoptosis in response to DNA damage by recruiting E4 ubiquitin-protein ligase ufd-2 to DNA repair foci. The protein is E3 ubiquitin-protein ligase hecd-1 of Caenorhabditis elegans.